A 329-amino-acid chain; its full sequence is DNA-directed RNA polymerase subunit alpha (329 aa).

The segment at 1-235 is alpha N-terminal domain (alpha-NTD); that stretch reads MQGSVTEFLK…EQLEAFVDLR (235 aa). An alpha C-terminal domain (alpha-CTD) region spans residues 249 to 329; sequence FDPILLRPVD…NWPPASIADE (81 aa).

It belongs to the RNA polymerase alpha chain family. As to quaternary structure, homodimer. The RNAP catalytic core consists of 2 alpha, 1 beta, 1 beta' and 1 omega subunit. When a sigma factor is associated with the core the holoenzyme is formed, which can initiate transcription.

It carries out the reaction RNA(n) + a ribonucleoside 5'-triphosphate = RNA(n+1) + diphosphate. In terms of biological role, DNA-dependent RNA polymerase catalyzes the transcription of DNA into RNA using the four ribonucleoside triphosphates as substrates. This chain is DNA-directed RNA polymerase subunit alpha, found in Sodalis glossinidius (strain morsitans).